We begin with the raw amino-acid sequence, 141 residues long: Hemoglobin subunit alpha (141 aa).

One can recognise a Globin domain in the interval valine 1–arginine 141. Phosphoserine is present on serine 3. 2 positions are modified to N6-succinyllysine: lysine 7 and lysine 11. Lysine 16 is subject to N6-acetyllysine; alternate. Lysine 16 carries the post-translational modification N6-succinyllysine; alternate. Tyrosine 24 carries the post-translational modification Phosphotyrosine. A Phosphoserine modification is found at serine 35. An N6-succinyllysine modification is found at lysine 40. Serine 49 carries the post-translational modification Phosphoserine. Histidine 58 lines the O2 pocket. Position 87 (histidine 87) interacts with heme b. A Phosphoserine modification is found at serine 102. Phosphothreonine is present on threonine 108. Residues serine 124 and serine 131 each carry the phosphoserine modification. 2 positions are modified to phosphothreonine: threonine 134 and threonine 137. Serine 138 carries the post-translational modification Phosphoserine.

The protein belongs to the globin family. As to quaternary structure, heterotetramer of two alpha chains and two beta chains. As to expression, red blood cells.

In terms of biological role, involved in oxygen transport from the lung to the various peripheral tissues. Functionally, hemopressin acts as an antagonist peptide of the cannabinoid receptor CNR1. Hemopressin-binding efficiently blocks cannabinoid receptor CNR1 and subsequent signaling. In Spermophilus citellus (European ground squirrel), this protein is Hemoglobin subunit alpha (HBA).